The primary structure comprises 349 residues: Probable sugar phosphate/phosphate translocator At5g25400 (349 aa).

Transmembrane regions (helical) follow at residues 15–35 (IIISYTYVAIWIFLSFTVIVY), 49–69 (FPISLTMIHMSFCSTLAFLLI), 89–109 (VVPIGALYSLSLWLSNSAYIY), 113–133 (SFIQMLKALMPVAVYSIGVLF), 141–161 (ETMMNMLSISFGVAIAAYGEA), 165–185 (VWGVILQLGAVAFEATRLVMI), 205–225 (VAPCCLAFLFIPWIVVEFPIL), 236–256 (LIFGTNSFCAFALNLAVFLLV), 263–283 (TMNVAGVVKDWLLIAFSWSVI), and 286–306 (TVTPINLFGYGIAFLGVAYYN). The EamA domain occupies 38–156 (YILDKKMYDW…LSISFGVAIA (119 aa)). The interval 321–349 (TAQQVDEETGRLLEEREGNEGGRKNEPED) is disordered. Basic and acidic residues predominate over residues 328 to 349 (ETGRLLEEREGNEGGRKNEPED).

This sequence belongs to the TPT transporter family. TPT (TC 2.A.7.9) subfamily.

The protein localises to the membrane. In Arabidopsis thaliana (Mouse-ear cress), this protein is Probable sugar phosphate/phosphate translocator At5g25400.